The following is a 430-amino-acid chain: Trigger factor (430 aa).

The PPIase FKBP-type domain maps to 165 to 250 (TDIAIFDFEG…LHQIKTKKIP (86 aa)).

The protein belongs to the FKBP-type PPIase family. Tig subfamily.

The protein localises to the cytoplasm. The enzyme catalyses [protein]-peptidylproline (omega=180) = [protein]-peptidylproline (omega=0). Involved in protein export. Acts as a chaperone by maintaining the newly synthesized protein in an open conformation. Functions as a peptidyl-prolyl cis-trans isomerase. In Onion yellows phytoplasma (strain OY-M), this protein is Trigger factor.